We begin with the raw amino-acid sequence, 207 residues long: Probable molybdenum cofactor guanylyltransferase (207 aa).

Residues 9–11 (LAG), lysine 21, and aspartate 97 each bind GTP. Aspartate 97 provides a ligand contact to Mg(2+).

It belongs to the MobA family. Mg(2+) is required as a cofactor.

It is found in the cytoplasm. The enzyme catalyses Mo-molybdopterin + GTP + H(+) = Mo-molybdopterin guanine dinucleotide + diphosphate. Functionally, transfers a GMP moiety from GTP to Mo-molybdopterin (Mo-MPT) cofactor (Moco or molybdenum cofactor) to form Mo-molybdopterin guanine dinucleotide (Mo-MGD) cofactor. The polypeptide is Probable molybdenum cofactor guanylyltransferase (Nostoc sp. (strain PCC 7120 / SAG 25.82 / UTEX 2576)).